A 421-amino-acid chain; its full sequence is Telomeric repeat-binding factor 1 (421 aa).

Residues M1 to G30 form a disordered region. Position 2 is an N-acetylalanine (A2). Residues E49–K255 are TRFH mediates dimerization. K200 participates in a covalent cross-link: Glycyl lysine isopeptide (Lys-Gly) (interchain with G-Cter in SUMO2). Position 206 is a phosphoserine; by ATM (S206). The tract at residues E252–R365 is interaction with RLIM. The span at N253–D266 shows a compositional bias: basic and acidic residues. The disordered stretch occupies residues N253–K366. The span at V284–S310 shows a compositional bias: polar residues. Residues K313 to R367 carry the Nuclear localization signal motif. Residues S362 to L419 form the HTH myb-type domain. The H-T-H motif DNA-binding region spans W390–K415.

Homodimer; can contain both isoforms. Found in a complex with POT1; TINF2 and TNKS1. Interacts with ATM, TINF2, TNKS1, TNKS2, PINX1, NEK2 and MAPRE1. Component of the shelterin complex (telosome) composed of TERF1, TERF2, TINF2, TERF2IP ACD and POT1. Interacts with RLIM (via N-terminus). Interacts with FBXO4. Interaction with TINF2 protects against interaction with FBXO4 and subsequent polyubiquitination and proteasomal degradation. Interacts with GNL3L; this interaction promotes homodimerization. Interacts with TIN2. Interactions with GNL3L and TIN2 are mutually exclusive. Interacts with RTEL1. Interacts with CCDC79/TERB1. In terms of processing, phosphorylated preferentially on Ser-219 in an ATM-dependent manner in response to ionizing DNA damage. ADP-ribosylation by TNKS1 or TNKS2 diminishes its ability to bind to telomeric DNA. Post-translationally, ubiquitinated by RLIM/RNF12, leading to its degradation by the proteasome. Ubiquitinated by a SCF (SKP1-CUL1-F-box protein) ubiquitin-protein ligase complex, leading to its degradation by the proteasome.

The protein localises to the nucleus. It localises to the chromosome. The protein resides in the telomere. It is found in the cytoplasm. Its subcellular location is the cytoskeleton. The protein localises to the spindle. Functionally, binds the telomeric double-stranded 5'-TTAGGG-3' repeat and negatively regulates telomere length. Involved in the regulation of the mitotic spindle. Component of the shelterin complex (telosome) that is involved in the regulation of telomere length and protection. Shelterin associates with arrays of double-stranded 5'-TTAGGG-3' repeats added by telomerase and protects chromosome ends; without its protective activity, telomeres are no longer hidden from the DNA damage surveillance and chromosome ends are inappropriately processed by DNA repair pathways. This chain is Telomeric repeat-binding factor 1 (Terf1), found in Mus musculus (Mouse).